The following is a 1434-amino-acid chain: Ankyrin and armadillo repeat-containing protein (1434 aa).

A helical transmembrane segment spans residues 309–329; the sequence is IRRGIGYLKLICFLIPFLLSL. 5 ANK repeats span residues 532-561, 569-598, 602-631, 638-667, and 671-701; these read AGYT…KVNQ, QGPT…DYTL, RGWM…SLLE, NQCT…NWRK, and KGNN…ELPV. ARM repeat units lie at residues 732-771, 773-812, 814-852, 855-894, 897-936, and 1072-1112; these read DQYW…NIST, KSAV…DIAQ, ENKD…VLCI, ENNQ…EVGR, KEIQ…SLAS, and PVSQ…CIVL.

Ubiquitously expressed with highest level in pancreas and lowest in skeletal muscle.

The protein localises to the membrane. This Homo sapiens (Human) protein is Ankyrin and armadillo repeat-containing protein (ANKAR).